Here is a 262-residue protein sequence, read N- to C-terminus: Methionine-rich nacre protein (262 aa).

An N-terminal signal peptide occupies residues 1–22 (MSIMRRILCLAVVIFIINDVSS). A compositionally biased stretch (low complexity) spans 26–35 (GNNKNWKKNG). Positions 26–84 (GNNKNWKKNGMSLSSPGNKKPTGNNAVPQKSKMNNMNQNSLSQPKRSSPPGNSMYNMAN) are disordered. Residues 36–84 (MSLSSPGNKKPTGNNAVPQKSKMNNMNQNSLSQPKRSSPPGNSMYNMAN) are compositionally biased toward polar residues.

In terms of tissue distribution, expressed in mantle and, after secretion, incorporated into acid-insoluble nacre matrix of the shell (at protein level). Expressed primarily in the mantle with highest level in the mantle pallium and lower level in the mantle edge.

It is found in the secreted. In Pinctada maxima (Silver-lipped pearl oyster), this protein is Methionine-rich nacre protein.